Here is a 313-residue protein sequence, read N- to C-terminus: PDCD10 and GCKIII kinases-associated protein 1 (313 aa).

The interval 40–89 is disordered; the sequence is RLKGTQNSEVEVPRNALHDGSLSNSESRGSTTGLPHQGPLPQEDSEERPC. A phosphoserine mark is found at S60 and S64. The segment covering 60-73 has biased composition (polar residues); sequence SLSNSESRGSTTGL. Residue T104 is modified to Phosphothreonine. 3 positions are modified to phosphoserine: S107, S237, and S240. A disordered region spans residues 253-286; sequence YFKEEGPTHPTPAADSGSEREDPHTYNGDREGVV. A compositionally biased stretch (basic and acidic residues) spans 269 to 285; the sequence is GSEREDPHTYNGDREGV.

As to quaternary structure, interacts with KEAP1; this interaction prevents the ubiquitination of KEAP1 by TRIM25, thus protecting KEAP1 from degradation. Found in association with PDCD10 and members of the STE20 kinases, such as STK24, STK25 and STK26.

The protein localises to the cell membrane. Acts as a tumor suppressor. Acts as a tumor suppressor for colorectal cancer cell proliferation by targeting KEAP1/USP17/ELK1/CDK6 axis. This Mus musculus (Mouse) protein is PDCD10 and GCKIII kinases-associated protein 1.